Reading from the N-terminus, the 526-residue chain is Cell adhesion molecule CEACAM1 (526 aa).

Residues Met-1–Ala-34 form the signal peptide. A Pyrrolidone carboxylic acid modification is found at Gln-35. The region spanning Gln-35–Pro-142 is the Ig-like V-type domain. Topologically, residues Gln-35–Gly-428 are extracellular. Residues Glu-39 to Pro-142 are required for homophilic binding. Asn-104, Asn-111, Asn-115, Asn-152, Asn-182, Asn-197, Asn-208, Asn-224, Asn-232, Asn-254, Asn-274, Asn-288, Asn-292, Asn-302, Asn-309, Asn-345, Asn-351, Asn-363, Asn-378, and Asn-405 each carry an N-linked (GlcNAc...) asparagine glycan. Ig-like C2-type domains lie at Pro-145–Asn-232, Pro-237–Ile-317, and Pro-323–Asn-413. Cysteines 167 and 215 form a disulfide. A disulfide bridge connects residues Cys-259 and Cys-299. Cys-348 and Cys-396 are oxidised to a cystine. The helical transmembrane segment at Ala-429–Leu-452 threads the bilayer. Residues Cys-450–Asp-462 form an interaction with calmodulin region. The interval Leu-452 to Gln-526 is interaction with FLNA. Residues His-453–Gln-526 are Cytoplasmic-facing. Basic and acidic residues predominate over residues Ser-461–Asn-482. Residues Ser-461 to Leu-513 form a disordered region. Positions Asn-489 to Leu-513 are enriched in polar residues. The interval Asn-489–Gln-526 is required for interaction with PTPN11 and PTPN6 and for control of phosphorylation level. Tyr-493 carries the post-translational modification Phosphotyrosine; by SRC, LCK, INSR and EGFR. The residue at position 508 (Ser-508) is a Phosphoserine. Tyr-520 is subject to Phosphotyrosine; by INSR, SRC and LCK. Residues Tyr-520–Val-523 are essential for interaction with PTPN11 and PTPN6.

This sequence belongs to the immunoglobulin superfamily. CEA family. As to quaternary structure, monomer. Oligomer. Heterodimer. Homodimer. Cis-dimer/oligomer (via Ig-like C2-type and/or via cytoplasmic domains); induced by trans-homophilic cell adhesion through an allosteric mechanism transmitted by the Ig-like V-type domain, and is regulated by intracellular calcium and calmodulin. Interacts (via cytoplasmic domain) with calmodulin in a calcium dependent manner; reduces homophilic cell adhesion through dissociation of dimer. Isoform 1 interacts (via cytoplasmic domain) with PTPN11 (preferentially) and PTPN6; cis-homodimer form is preferred; this interaction is decreased by formation of Isoform 1 /Isoform 8 cis-heterodimers and is dependent on the monomer/dimer equilibrium; this interaction is phosphorylation-dependent. Isoform 1 interacts with LYN. Isoform 1 interacts (via cytoplasmic domain) with SRC (via SH2 domain); this interaction is regulated by trans-homophilic cell adhesion. Isoform 1 interacts (via cytoplasmic domain) with LCK; mediates phosphorylation at Tyr-493 and Tyr-520 resulting in PTPN6 association. Isoform 1 interacts with PTPN6; this interaction is phosphorylation-dependent and causes a profound decrease in TCR stimulation-induced CD247 and ZAP70 phosphorylation. Isoform 1 interacts with TCR/CD3 complex through TCR beta chain and CD3E; colocalizes at the cell surface and upon stimulation of the TCR/CD3 complex recruits PTPN6 in the TCR/CD3 complex, resulting in dephosphorylation of CD247 and ZAP70. Isoform 1 interacts (via cytoplasmic domain) with SHC1 (via SH2 domain); SHC1 mediates interaction with INSR or EGFR in a Ser-508 phosphorylation-dependent manner. Isoform 1 interacts with EGFR; the interaction is indirect. Isoform 1 interacts with CSF3R; down-regulates the CSF3R-STAT3 pathway through recruitment of PTPN6 that dephosphorylates CSF3R. Isoform 1 (phosphorylated form) interacts with TLR4 and SYK; recruits PTPN6 that dephosphorylates SYK, reducing the production of reactive oxygen species (ROS) and lysosome disruption, leading to a reduction of the inflammasome activity. Isoform 1 interacts with FLNA; inhibits cell migration and cell scattering by interfering with the interaction of FLNA with RALA. Isoform 1 interacts (via cytoplasmic domain) with PXN; the interaction is phosphotyrosyl-dependent. Isoform 1 interacts with KLRK1; recruits PTPN6 that dephosphorylates VAV1. Isoform 1 interacts with CEACAM8. Isoform 1 interacts with FASN; this interaction is insulin and phosphorylation-dependent; reduces fatty-acid synthase activity. Interacts (via Ig-like V-type) with HAVCR2 (via Ig-like V-type); facilitates the maturation and cell surface expression of HAVCR2 thereby regulating T cell tolerance induction. Isoform 8 interacts (via the cytoplasmic domain) with ANXA2; this interaction is regulated by phosphorylation and appears in the AIIt complex. Interacts (via Lewis X moieties) with CD209 (via C-type lectin domain); this interaction is regulated by the glycosylation pattern of CEACAM1 on cell types and regulates contact between dendritic cells and neutrophils. Post-translationally, phosphorylated on serine and tyrosine. Isoform 1 is phosphorylated on tyrosine by Src family kinases like SRC and LCK and by receptor like CSF3R, EGFR and INSR upon stimulation. Phosphorylated at Ser-508; mediates activity. Phosphorylated at Tyr-493; regulates activity. Phosphorylated at Tyr-493 by EGFR and INSR upon stimulation; this phosphorylation is Ser-508-phosphorylation-dependent; mediates cellular internalization; increases interaction with downstream proteins like SHC1 and FASN. Phosphorylated at Tyr-493 and Tyr-520 by LCK; mediates PTPN6 association and is regulated by homophilic ligation of CEACAM1 in the absence of T cell activation. Phosphorylated at Tyr-520; mediates interaction with PTPN11. In terms of processing, phosphorylated on serine and threonine. In terms of tissue distribution, expressed in columnar epithelial cells of the colon (at protein level). The predominant forms expressed by T cells are those containing a long cytoplasmic domain. Expressed in granulocytes and lymphocytes. Leukocytes only express isoforms 6 and isoform 1.

Its subcellular location is the cell membrane. It is found in the lateral cell membrane. The protein localises to the apical cell membrane. It localises to the basal cell membrane. The protein resides in the cell junction. Its subcellular location is the adherens junction. It is found in the secreted. The protein localises to the cytoplasmic vesicle. It localises to the secretory vesicle membrane. The protein resides in the cell projection. Its subcellular location is the microvillus membrane. Cell adhesion protein that mediates homophilic cell adhesion in a calcium-independent manner. Plays a role as coinhibitory receptor in immune response, insulin action and also functions as an activator during angiogenesis. Its coinhibitory receptor function is phosphorylation- and PTPN6 -dependent, which in turn, suppress signal transduction of associated receptors by dephosphorylation of their downstream effectors. Plays a role in immune response, of T cells, natural killer (NK) and neutrophils. Upon TCR/CD3 complex stimulation, inhibits TCR-mediated cytotoxicity by blocking granule exocytosis by mediating homophilic binding to adjacent cells, allowing interaction with and phosphorylation by LCK and interaction with the TCR/CD3 complex which recruits PTPN6 resulting in dephosphorylation of CD247 and ZAP70. Also inhibits T cell proliferation and cytokine production through inhibition of JNK cascade and plays a crucial role in regulating autoimmunity and anti-tumor immunity by inhibiting T cell through its interaction with HAVCR2. Upon natural killer (NK) cells activation, inhibit KLRK1-mediated cytolysis of CEACAM1-bearing tumor cells by trans-homophilic interactions with CEACAM1 on the target cell and lead to cis-interaction between CEACAM1 and KLRK1, allowing PTPN6 recruitment and then VAV1 dephosphorylation. Upon neutrophils activation negatively regulates IL1B production by recruiting PTPN6 to a SYK-TLR4-CEACAM1 complex, that dephosphorylates SYK, reducing the production of reactive oxygen species (ROS) and lysosome disruption, which in turn, reduces the activity of the inflammasome. Down-regulates neutrophil production by acting as a coinhibitory receptor for CSF3R by down-regulating the CSF3R-STAT3 pathway through recruitment of PTPN6 that dephosphorylates CSF3R. Also regulates insulin action by promoting INS clearance and regulating lipogenesis in liver through regulating insulin signaling. Upon INS stimulation, undergoes phosphorylation by INSR leading to INS clearance by increasing receptor-mediated insulin endocytosis. This inernalization promotes interaction with FASN leading to receptor-mediated insulin degradation and to reduction of FASN activity leading to negative regulation of fatty acid synthesis. INSR-mediated phosphorylation also provokes a down-regulation of cell proliferation through SHC1 interaction resulting in decrease coupling of SHC1 to the MAPK3/ERK1-MAPK1/ERK2 and phosphatidylinositol 3-kinase pathways. Functions as activator in angiogenesis by promoting blood vessel remodeling through endothelial cell differentiation and migration and in arteriogenesis by increasing the number of collateral arteries and collateral vessel calibers after ischemia. Also regulates vascular permeability through the VEGFR2 signaling pathway resulting in control of nitric oxide production. Down-regulates cell growth in response to EGF through its interaction with SHC1 that mediates interaction with EGFR resulting in decrease coupling of SHC1 to the MAPK3/ERK1-MAPK1/ERK2 pathway. Negatively regulates platelet aggregation by decreasing platelet adhesion on type I collagen through the GPVI-FcRgamma complex. Inhibits cell migration and cell scattering through interaction with FLNA; interferes with the interaction of FLNA with RALA. Mediates bile acid transport activity in a phosphorylation dependent manner. Negatively regulates osteoclastogenesis. In terms of biological role, cell adhesion protein that mediates homophilic cell adhesion in a calcium-independent manner. Promotes populations of T cells regulating IgA production and secretion associated with control of the commensal microbiota and resistance to enteropathogens. This Homo sapiens (Human) protein is Cell adhesion molecule CEACAM1.